The following is a 341-amino-acid chain: Serpentine receptor class beta-3 (341 aa).

The Extracellular portion of the chain corresponds to 1–23 (MLETNDSVCELAYQLAYHPVYRS). Asn5 carries an N-linked (GlcNAc...) asparagine glycan. A helical membrane pass occupies residues 24 to 44 (SQFWSMLVSSLSIPALIYFIT). Over 45–58 (RKIFFLHFHGNLKC) the chain is Cytoplasmic. A helical transmembrane segment spans residues 59 to 79 (LLIVYFICNLLFSMALCFAFF). Topologically, residues 80–103 (YQFLIPFFVTSKCQLLINTTLFKW) are extracellular. The N-linked (GlcNAc...) asparagine glycan is linked to Asn97. Residues 104–124 (GQICSFLLLTSSMLLPIGFSI) traverse the membrane as a helical segment. Residues 125-141 (ERFVALGNAQKYESSRT) are Cytoplasmic-facing. A helical membrane pass occupies residues 142 to 162 (FLGPVIIFIIIAVDFSIIFSV). Topologically, residues 163–187 (YKNEPFTEGFYSFILVPSTTASQIN) are extracellular. A helical transmembrane segment spans residues 188 to 208 (MYFFVLLFVKIFNLLLNCILL). The Cytoplasmic portion of the chain corresponds to 209 to 237 (RIHKKIRIKYYSLSVRYEMEEILQSSKFT). Residues 238 to 258 (FIIRFTHLLFFGFYVVVILFV) form a helical membrane-spanning segment. Residues 259-276 (RIMGESFFNGTLNYSVAR) are Extracellular-facing. 2 N-linked (GlcNAc...) asparagine glycosylation sites follow: Asn267 and Asn271. The chain crosses the membrane as a helical span at residues 277–297 (GVFCTVPTYNLIIVIIGIKSL). Over 298 to 341 (RHLNLQRLNKVQSTVQIKSTGKEGSKNYEDIITNYWDSVSSRTP) the chain is Cytoplasmic.

This sequence belongs to the nematode receptor-like protein srb family. Expressed throughout the head.

Its subcellular location is the cell membrane. The protein resides in the perikaryon. It is found in the cell projection. The protein localises to the dendrite. Functionally, G-protein coupled receptor. The polypeptide is Serpentine receptor class beta-3 (Caenorhabditis elegans).